The primary structure comprises 696 residues: Glutamate-rich protein 6B (696 aa).

Residues 1 to 10 show a composition bias toward polar residues; sequence MSAENNQLSG. Residues 1–105 form a disordered region; the sequence is MSAENNQLSG…EYLEKAGYLE (105 aa). Composition is skewed to acidic residues over residues 32–44 and 54–72; these read EDTEVELDEESLQ and ESLEDKEYLEEEEDLEEEE. Residues 73-91 show a composition bias toward basic and acidic residues; sequence YLGKEEYLKEEEYLGKEEH.

It belongs to the ERICH6 family.

The protein is Glutamate-rich protein 6B (ERICH6B) of Homo sapiens (Human).